The primary structure comprises 121 residues: Keratin-associated protein 1-4 (121 aa).

The protein belongs to the KRTAP type 1 family. Interacts with hair keratins. Expressed in the middle/upper portions of the hair cortex, in the region termed the keratogenous zone.

Its function is as follows. In the hair cortex, hair keratin intermediate filaments are embedded in an interfilamentous matrix, consisting of hair keratin-associated proteins (KRTAP), which are essential for the formation of a rigid and resistant hair shaft through their extensive disulfide bond cross-linking with abundant cysteine residues of hair keratins. The matrix proteins include the high-sulfur and high-glycine-tyrosine keratins. This Homo sapiens (Human) protein is Keratin-associated protein 1-4 (KRTAP1-4).